Here is a 396-residue protein sequence, read N- to C-terminus: MAQSIEAILAELKRGVENIYSEEDLIAKLKENRPLRIKLGADPTAPDIHLGHTVVINKLRQFQQLGHEVIFLIGDFTGMVGDPSGKNTTRPPLTREDVLRNAETYKQQLFKILDPNKTRVVFNSAWLNELGTEGMIRLTSNYTVARMLERDDFKKRFTNNQPIAIHEFIYPLLQGYDSVALQADVELGGTDQTFNLLVGRELQKSAEQKPQVAITLPLLVGLDGEKKMSKSLGNYIGVTEAPNEMFGKVMSISDELMWDWYNLLSFRPLAEITQLKADVDAGKNPRDVKILLAKEIITRFHSEAEADLAEQHFINRFQKGAIPDEMPEFCFNGEIGLATLLKEAGLVASTSEAIRSAQQGGVKIDGQKIDDVRANAQLGTFVYQVGKRKFARVTVK.

The 'HIGH' region signature appears at 43-52; the sequence is PTAPDIHLGH. A 'KMSKS' region motif is present at residues 227-231; that stretch reads KMSKS. Lys230 is a binding site for ATP. Positions 335–395 constitute an S4 RNA-binding domain; it reads IGLATLLKEA…GKRKFARVTV (61 aa).

This sequence belongs to the class-I aminoacyl-tRNA synthetase family. TyrS type 2 subfamily. In terms of assembly, homodimer.

The protein resides in the cytoplasm. It carries out the reaction tRNA(Tyr) + L-tyrosine + ATP = L-tyrosyl-tRNA(Tyr) + AMP + diphosphate + H(+). Its function is as follows. Catalyzes the attachment of tyrosine to tRNA(Tyr) in a two-step reaction: tyrosine is first activated by ATP to form Tyr-AMP and then transferred to the acceptor end of tRNA(Tyr). The sequence is that of Tyrosine--tRNA ligase from Haemophilus ducreyi (strain 35000HP / ATCC 700724).